Here is a 310-residue protein sequence, read N- to C-terminus: Cell division protein FtsQ (310 aa).

The interval 1 to 57 is disordered; sequence MSEPENTAEDKDAEAAISADAVESETTADGGENPAEGESAEGPRMRARRERMERREA. Residues 1 to 95 are Cytoplasmic-facing; sequence MSEPENTAED…AGRGKVQGLQ (95 aa). A helical membrane pass occupies residues 96–116; the sequence is TLLLVVLLALIAVGLGSILYF. At 117-310 the chain is on the extracellular side; that stretch reads TPLMSVRQTV…VSSPDLPTVK (194 aa). In terms of domain architecture, POTRA spans 120 to 188; it reads MSVRQTVVTG…STLRVTIVER (69 aa).

This sequence belongs to the FtsQ/DivIB family. FtsQ subfamily.

The protein localises to the cell membrane. Essential cell division protein. This is Cell division protein FtsQ from Mycobacteroides abscessus (strain ATCC 19977 / DSM 44196 / CCUG 20993 / CIP 104536 / JCM 13569 / NCTC 13031 / TMC 1543 / L948) (Mycobacterium abscessus).